The chain runs to 245 residues: Transmembrane protein 69 (245 aa).

Transmembrane regions (helical) follow at residues 97–117, 122–142, 159–179, 185–205, and 216–236; these read ALYI…LMVI, IPVL…FLGG, YINL…ILFS, AIVT…FLLP, and IVST…ENIY.

It localises to the membrane. The sequence is that of Transmembrane protein 69 (Tmem69) from Mus musculus (Mouse).